The primary structure comprises 534 residues: Anther-specific proline-rich protein APG (534 aa).

Positions 1–35 are cleaved as a signal peptide; the sequence is MKRSSLVDSCSYSRIFRSIFCLLSFCIFFLTTTNA. The span at 59 to 196 shows a compositional bias: pro residues; that stretch reads NPPTPDPSPK…SPKPAPSPPK (138 aa). The tract at residues 59 to 202 is disordered; that stretch reads NPPTPDPSPK…SPPKPENKTI (144 aa). Ser211 functions as the Nucleophile in the catalytic mechanism. Active-site residues include Asp508 and His511.

Belongs to the 'GDSL' lipolytic enzyme family. In terms of tissue distribution, found in sporophytic and gametophytic cell types in the anther, only in male fertile plants.

This is Anther-specific proline-rich protein APG (APG) from Arabidopsis thaliana (Mouse-ear cress).